Here is a 172-residue protein sequence, read N- to C-terminus: MSSRPLAVLIGSPGAGKTTVGRALAERLGVDLLDTDAEIERRAGKTVSDIFVEDGEEAFRALEREVVAEALASHPGVVALGGGAILNEQTRADLAGHRVVYLEVEFADAAKRVGLDTARPLLLGNPRARLKALLRERLPIYQSLATLTVSTSEHTPEEAAELIAKELPAAGD.

An ATP-binding site is contributed by 14–19 (GAGKTT). Thr18 is a binding site for Mg(2+). Asp36, Arg60, and Gly82 together coordinate substrate. Residue Arg119 coordinates ATP. Arg137 serves as a coordination point for substrate.

It belongs to the shikimate kinase family. Monomer. Mg(2+) serves as cofactor.

The protein resides in the cytoplasm. It carries out the reaction shikimate + ATP = 3-phosphoshikimate + ADP + H(+). It participates in metabolic intermediate biosynthesis; chorismate biosynthesis; chorismate from D-erythrose 4-phosphate and phosphoenolpyruvate: step 5/7. In terms of biological role, catalyzes the specific phosphorylation of the 3-hydroxyl group of shikimic acid using ATP as a cosubstrate. The protein is Shikimate kinase of Thermobifida fusca (strain YX).